Reading from the N-terminus, the 134-residue chain is Interleukin-5 (134 aa).

The N-terminal stretch at 1–19 (MRMLLHLSLLALGAAYVSA) is a signal peptide. N76 and N90 each carry an N-linked (GlcNAc...) asparagine glycan.

It belongs to the IL-5 family. As to quaternary structure, homodimer; disulfide-linked. Interacts with IL5RA. Interacts with CSF2RB.

The protein resides in the secreted. Homodimeric cytokine expressed predominantly by T-lymphocytes and NK cells that plays an important role in the survival, differentiation, and chemotaxis of eosinophils. Also acts on activated and resting B-cells to induce immunoglobulin production, growth, and differentiation. Mechanistically, exerts its biological effects through a receptor composed of IL5RA subunit and the cytokine receptor common subunit beta/CSF2RB. Binding to the receptor leads to activation of various kinases including LYN, SYK and JAK2 and thereby propagates signals through the RAS-MAPK and JAK-STAT5 pathways respectively. In Felis catus (Cat), this protein is Interleukin-5 (IL5).